The chain runs to 2155 residues: Conidial pigment polyketide synthase PfmaE (2155 aa).

The interval 8–245 (LLFGDQSLDT…TAIPVYGPYH (238 aa)) is N-terminal acylcarrier protein transacylase domain (SAT). The 433-residue stretch at 381 to 813 (KCKLAIVGMA…GGNTGLLLED (433 aa)) folds into the Ketosynthase family 3 (KS3) domain. Active-site for beta-ketoacyl synthase activity residues include C553, H688, and H731. The tract at residues 910–1231 (AFMFTGQGSH…LCTLHSAGLN (322 aa)) is malonyl-CoA:ACP transacylase (MAT) domain. The For acyl/malonyl transferase activity role is filled by S1001. The segment at 1293-1608 (TTTVQKVVRE…PRKVLNVVLP (316 aa)) is product template (PT) domain. An N-terminal hotdog fold region spans residues 1297-1428 (QKVVREEVKG…CKVFFGDNEE (132 aa)). A PKS/mFAS DH domain is found at 1297-1604 (QKVVREEVKG…FQAIPRKVLN (308 aa)). Residue H1329 is the Proton acceptor; for dehydratase activity of the active site. The tract at residues 1455–1604 (DASKIGRGLA…FQAIPRKVLN (150 aa)) is C-terminal hotdog fold. D1516 serves as the catalytic Proton donor; for dehydratase activity. 2 consecutive Carrier domains span residues 1653-1730 (LTKN…AQFE) and 1779-1856 (GNVS…GIED). S1690 is subject to O-(pantetheine 4'-phosphoryl)serine. The tract at residues 1738 to 1782 (EENAHSSASSDSADMETESNFTTPSDDSEKDEVKGDAPAADGNVS) is disordered. Position 1816 is an O-(pantetheine 4'-phosphoryl)serine (S1816). The tract at residues 1855-1892 (EDKPKRAAPKSAKQEPAKPEPKVQGEAKAHTNPVDNYP) is disordered. Positions 1866–1883 (AKQEPAKPEPKVQGEAKA) are enriched in basic and acidic residues. Residues 1911-2041 (QLFMIPDGSG…LGEGDDAEAK (131 aa)) form a thioesterase (TE) domain region.

It functions in the pathway pigment biosynthesis; melanin biosynthesis. Its function is as follows. Non-reducing polyketide synthase; part of the gene cluster that mediates the biosynthesis of dihydroxynaphthalene (DHN)-melanin, a bluish-green pigment forming a dark layer in the conidial wall that protects the conidia from UV radiations. The first step of the pathway is the production of the pentaketide 1,3,6,8-tetrahydroxynaphthalene (1,3,6,8-THN or T4HN) by the polyketide synthase PfmaE though condensation of acetyl-CoA with malonyl-CoA. T4HN is not stable and easily oxidizes into the stable form flaviolin. T4HN is also substrate of the hydroxynaphthalene reductase PfmaG to yield scytalone. The scytalone dehydratase PfmaJ then reduces scytalone to 1,3,8-THN. 1,3,8-THN is then substrate of the hydroxynaphthalene reductase PfmaI to yield vermelone. Vermelone is further converted by the multicopper oxidase PfmaD to 1,8-DHN. Finally the laccase PFICI_06862 transforms 1,8-DHN to DHN-melanin. The roles of the 5-oxoprolinase PfmaA and the proline iminopeptidase PfmaB within the cluster have not been elucidated yet. In Pestalotiopsis fici (strain W106-1 / CGMCC3.15140), this protein is Conidial pigment polyketide synthase PfmaE.